The primary structure comprises 160 residues: RNA pyrophosphohydrolase (160 aa).

The 145-residue stretch at proline 10–aspartate 154 folds into the Nudix hydrolase domain. A Nudix box motif is present at residues glycine 44–glycine 65.

This sequence belongs to the Nudix hydrolase family. RppH subfamily. Requires a divalent metal cation as cofactor.

In terms of biological role, accelerates the degradation of transcripts by removing pyrophosphate from the 5'-end of triphosphorylated RNA, leading to a more labile monophosphorylated state that can stimulate subsequent ribonuclease cleavage. The polypeptide is RNA pyrophosphohydrolase (Dinoroseobacter shibae (strain DSM 16493 / NCIMB 14021 / DFL 12)).